A 478-amino-acid chain; its full sequence is MLO-like protein 13 (478 aa).

At 1–10 the chain is on the extracellular side; that stretch reads MAEARSGSLE. The helical transmembrane segment at 11 to 31 threads the bilayer; the sequence is YTPTWVVAFICFIIVLLSLLA. Topologically, residues 32 to 60 are cytoplasmic; that stretch reads ERGLHHLGKCLKRRQQDALFEALQKLKEE. Residues 61 to 81 traverse the membrane as a helical segment; it reads LMLLGFISLMLTVSQAAIRHI. Residues 82–145 are Extracellular-facing; it reads CVPPALVNNM…VSVEALHQLH (64 aa). A helical transmembrane segment spans residues 146 to 166; it reads IFIFVLAVFHVIFCASTMVLG. Over 167–276 the chain is Cytoplasmic; sequence GARIQQWKHW…LRTLEIDFKK (110 aa). Helical transmembrane passes span 277 to 297 and 298 to 318; these read VVSI…LNVG and GWNT…MVGA. At 319 to 360 the chain is on the cytoplasmic side; it reads KLEYIISSLALDVSEKRSRAEEAVITPSDELFWFHRPGIVLQ. A helical membrane pass occupies residues 361 to 381; that stretch reads LIHFILFQNSFEIAFFFWILF. Topologically, residues 382–400 are extracellular; the sequence is TYGIHSCIMEKLGYLIPRL. The helical transmembrane segment at 401 to 421 threads the bilayer; that stretch reads VMGVLVQVLCSYSTLPLYALV. The Cytoplasmic portion of the chain corresponds to 422–478; that stretch reads TQMGSKFKKGIFDNVVQSTLEGWLEDTRNRGESTSEAHRIEMQPTTPESYNVQSENP. The tract at residues 435-456 is calmodulin-binding; it reads NVVQSTLEGWLEDTRNRGESTS. The span at 449–462 shows a compositional bias: basic and acidic residues; that stretch reads RNRGESTSEAHRIE. Residues 449-478 are disordered; sequence RNRGESTSEAHRIEMQPTTPESYNVQSENP. A compositionally biased stretch (polar residues) spans 464-478; it reads QPTTPESYNVQSENP.

Belongs to the MLO family.

It is found in the membrane. May be involved in modulation of pathogen defense and leaf cell death. Activity seems to be regulated by Ca(2+)-dependent calmodulin binding and seems not to require heterotrimeric G proteins. In Arabidopsis thaliana (Mouse-ear cress), this protein is MLO-like protein 13 (MLO13).